The primary structure comprises 507 residues: Polygalacturonase (507 aa).

A signal peptide spans 1–20 (MSMKFMAALAFLALQLIVMA). A propeptide spanning residues 21–54 (AGEDQSAQIMLDSDTKQYHRSSRNLRKRVHHARH) is cleaved from the precursor. 6 PbH1 repeats span residues 215–241 (CDGV…DIFA), 242–263 (SKRF…AVGT), 265–285 (SSNI…SIGS), 295–316 (VSFV…RIKT), 324–345 (ASHI…LINQ), and 358–385 (RSAV…QLMC). Aspartate 256 acts as the Proton donor in catalysis. Residue asparagine 267 is glycosylated (N-linked (GlcNAc...) asparagine). Histidine 279 is a catalytic residue.

It belongs to the glycosyl hydrolase 28 family.

Its subcellular location is the secreted. It localises to the cell wall. The catalysed reaction is (1,4-alpha-D-galacturonosyl)n+m + H2O = (1,4-alpha-D-galacturonosyl)n + (1,4-alpha-D-galacturonosyl)m.. The polypeptide is Polygalacturonase (JNA2) (Juniperus ashei (Ozark white cedar)).